Consider the following 692-residue polypeptide: Threonine--tRNA ligase (692 aa).

Residues 1 to 20 (MSAPAQPAPGVDGGDPSQAR) are disordered. In terms of domain architecture, TGS spans 1-74 (MSAPAQPAPG…DVDTDITPVA (74 aa)). A catalytic region spans residues 269–575 (DHRKLGVELD…LTEHYAGAFP (307 aa)). 3 residues coordinate Zn(2+): Cys374, His425, and His552.

It belongs to the class-II aminoacyl-tRNA synthetase family. In terms of assembly, homodimer. It depends on Zn(2+) as a cofactor.

The protein localises to the cytoplasm. The catalysed reaction is tRNA(Thr) + L-threonine + ATP = L-threonyl-tRNA(Thr) + AMP + diphosphate + H(+). Catalyzes the attachment of threonine to tRNA(Thr) in a two-step reaction: L-threonine is first activated by ATP to form Thr-AMP and then transferred to the acceptor end of tRNA(Thr). Also edits incorrectly charged L-seryl-tRNA(Thr). In Mycobacterium tuberculosis (strain CDC 1551 / Oshkosh), this protein is Threonine--tRNA ligase.